The chain runs to 29 residues: NAD(P)H-quinone oxidoreductase subunit 5, chloroplastic (29 aa).

Residues 1–15 form a helical membrane-spanning segment; it reads SGSIIHSMEANVGYS.

It belongs to the complex I subunit 5 family. In terms of assembly, NDH is composed of at least 16 different subunits, 5 of which are encoded in the nucleus.

Its subcellular location is the plastid. It is found in the chloroplast thylakoid membrane. The catalysed reaction is a plastoquinone + NADH + (n+1) H(+)(in) = a plastoquinol + NAD(+) + n H(+)(out). It carries out the reaction a plastoquinone + NADPH + (n+1) H(+)(in) = a plastoquinol + NADP(+) + n H(+)(out). NDH shuttles electrons from NAD(P)H:plastoquinone, via FMN and iron-sulfur (Fe-S) centers, to quinones in the photosynthetic chain and possibly in a chloroplast respiratory chain. The immediate electron acceptor for the enzyme in this species is believed to be plastoquinone. Couples the redox reaction to proton translocation, and thus conserves the redox energy in a proton gradient. This is NAD(P)H-quinone oxidoreductase subunit 5, chloroplastic from Pseudotsuga menziesii (Douglas-fir).